A 112-amino-acid chain; its full sequence is Flowering-promoting factor 1-like protein 2 (112 aa).

This sequence belongs to the FPF1 family. As to expression, expressed in leaves and in some parts of the flowers, mainly in the sepals.

Its function is as follows. Modulates the competence to flowering of apical meristems. The protein is Flowering-promoting factor 1-like protein 2 (FLP2) of Arabidopsis thaliana (Mouse-ear cress).